The primary structure comprises 122 residues: Large ribosomal subunit protein uL29 (122 aa).

S12 carries the phosphoserine modification.

The protein belongs to the universal ribosomal protein uL29 family. As to quaternary structure, component of the large ribosomal subunit (LSU). Mature yeast ribosomes consist of a small (40S) and a large (60S) subunit. The 40S small subunit contains 1 molecule of ribosomal RNA (18S rRNA) and at least 33 different proteins. The large 60S subunit contains 3 rRNA molecules (25S, 5.8S and 5S rRNA) and at least 46 different proteins. uL29 is associated with the polypeptide exit tunnel.

The protein localises to the cytoplasm. It is found in the nucleus. Its subcellular location is the nucleolus. Functionally, component of the ribosome, a large ribonucleoprotein complex responsible for the synthesis of proteins in the cell. The small ribosomal subunit (SSU) binds messenger RNAs (mRNAs) and translates the encoded message by selecting cognate aminoacyl-transfer RNA (tRNA) molecules. The large subunit (LSU) contains the ribosomal catalytic site termed the peptidyl transferase center (PTC), which catalyzes the formation of peptide bonds, thereby polymerizing the amino acids delivered by tRNAs into a polypeptide chain. The nascent polypeptides leave the ribosome through a tunnel in the LSU and interact with protein factors that function in enzymatic processing, targeting, and the membrane insertion of nascent chains at the exit of the ribosomal tunnel. The polypeptide is Large ribosomal subunit protein uL29 (rpl35) (Schizosaccharomyces pombe (strain 972 / ATCC 24843) (Fission yeast)).